A 97-amino-acid chain; its full sequence is Small integral membrane protein 8 (97 aa).

Over residues Met-1 to Ser-14 the composition is skewed to low complexity. Residues Met-1–Arg-26 are disordered. Residues Val-49–Ala-69 traverse the membrane as a helical segment.

It belongs to the SMIM8 family.

It is found in the membrane. The protein is Small integral membrane protein 8 (smim8) of Xenopus tropicalis (Western clawed frog).